The following is a 115-amino-acid chain: Small ribosomal subunit protein bS16 (115 aa).

Positions 81-115 are disordered; that stretch reads GLAPKPTYNEQPKKSAPKAKAQERAKAAADAAAAA.

It belongs to the bacterial ribosomal protein bS16 family.

In Gluconobacter oxydans (strain 621H) (Gluconobacter suboxydans), this protein is Small ribosomal subunit protein bS16.